Here is a 447-residue protein sequence, read N- to C-terminus: Mannose/glucose-specific lectin (447 aa).

A run of 3 repeats spans residues 1 to 149 (SLKG…VQPV), 150 to 295 (PHGT…VKPR), and 296 to 447 (DVEG…DTAV). The 3 X approximate tandem repeats stretch occupies residues 1-447 (SLKGMISVGP…GIFVKPDTAV (447 aa)). Jacalin-type lectin domains lie at 5–148 (MISV…FVQP), 153–294 (TISF…YVKP), and 300–443 (SISI…FVKP).

It belongs to the jacalin lectin family. As to quaternary structure, homodimer. The N-terminus is blocked.

Its function is as follows. Mannose/glucose specific lectin. Shows agglutinating activity against rabbit erythrocytes. This Parkia platycephala protein is Mannose/glucose-specific lectin.